The sequence spans 84 residues: RQC P-site tRNA stabilizing factor (84 aa).

The 64-residue stretch at 1–64 (MRIDKFLQSV…IEEYTILQIP (64 aa)) folds into the S4 RNA-binding domain.

Belongs to the RqcP family. As to quaternary structure, associates with stalled 50S ribosomal subunits. Binds to RqcH, 23S rRNA and the P-site tRNA. Does not require RqcH for association with 50S subunits.

Key component of the ribosome quality control system (RQC), a ribosome-associated complex that mediates the extraction of incompletely synthesized nascent chains from stalled ribosomes and their subsequent degradation. RqcH recruits Ala-charged tRNA, and with RqcP directs the elongation of stalled nascent chains on 50S ribosomal subunits, leading to non-templated C-terminal alanine extensions (Ala tail). The Ala tail promotes nascent chain degradation. RqcP is associated with the translocation-like movement of the peptidyl-tRNA from the A-site into the P-site. This is RQC P-site tRNA stabilizing factor from Helicobacter pylori (strain ATCC 700392 / 26695) (Campylobacter pylori).